Reading from the N-terminus, the 451-residue chain is Tubulin alpha-3 chain (451 aa).

A GTP-binding site is contributed by glutamine 11. The residue at position 40 (lysine 40) is an N6-acetyllysine. GTP is bound by residues glutamate 71, serine 140, glycine 144, threonine 145, threonine 179, asparagine 206, and asparagine 228. A Mg(2+)-binding site is contributed by glutamate 71. Glutamate 254 is a catalytic residue.

The protein belongs to the tubulin family. Dimer of alpha and beta chains. A typical microtubule is a hollow water-filled tube with an outer diameter of 25 nm and an inner diameter of 15 nM. Alpha-beta heterodimers associate head-to-tail to form protofilaments running lengthwise along the microtubule wall with the beta-tubulin subunit facing the microtubule plus end conferring a structural polarity. Microtubules usually have 13 protofilaments but different protofilament numbers can be found in some organisms and specialized cells. Mg(2+) serves as cofactor. Undergoes a tyrosination/detyrosination cycle, the cyclic removal and re-addition of a C-terminal tyrosine residue by the enzymes tubulin tyrosine carboxypeptidase (TTCP) and tubulin tyrosine ligase (TTL), respectively. Post-translationally, acetylation of alpha chains at Lys-40 stabilizes microtubules and affects affinity and processivity of microtubule motors. This modification has a role in multiple cellular functions, ranging from cell motility, cell cycle progression or cell differentiation to intracellular trafficking and signaling.

The protein resides in the cytoplasm. It is found in the cytoskeleton. It carries out the reaction GTP + H2O = GDP + phosphate + H(+). Tubulin is the major constituent of microtubules, a cylinder consisting of laterally associated linear protofilaments composed of alpha- and beta-tubulin heterodimers. Microtubules grow by the addition of GTP-tubulin dimers to the microtubule end, where a stabilizing cap forms. Below the cap, tubulin dimers are in GDP-bound state, owing to GTPase activity of alpha-tubulin. This Homarus americanus (American lobster) protein is Tubulin alpha-3 chain.